The chain runs to 171 residues: UPF0725 protein At3g25080 (171 aa).

Belongs to the UPF0725 (EMB2204) family.

This chain is UPF0725 protein At3g25080, found in Arabidopsis thaliana (Mouse-ear cress).